We begin with the raw amino-acid sequence, 249 residues long: Triosephosphate isomerase (249 aa).

9–11 lines the substrate pocket; it reads NWK. H94 acts as the Electrophile in catalysis. The active-site Proton acceptor is the E166. Substrate contacts are provided by residues G172 and 232–233; that span reads GG.

It belongs to the triosephosphate isomerase family. In terms of assembly, homodimer.

It localises to the cytoplasm. The enzyme catalyses D-glyceraldehyde 3-phosphate = dihydroxyacetone phosphate. It functions in the pathway carbohydrate biosynthesis; gluconeogenesis. It participates in carbohydrate degradation; glycolysis; D-glyceraldehyde 3-phosphate from glycerone phosphate: step 1/1. Functionally, involved in the gluconeogenesis. Catalyzes stereospecifically the conversion of dihydroxyacetone phosphate (DHAP) to D-glyceraldehyde-3-phosphate (G3P). The chain is Triosephosphate isomerase from Xylella fastidiosa (strain 9a5c).